A 729-amino-acid chain; its full sequence is Polyribonucleotide nucleotidyltransferase (729 aa).

The segment at 399–419 (YMHNYNFPPYSTGETGRVGSP) is disordered. 2 residues coordinate Mg(2+): D509 and D515. In terms of domain architecture, KH spans 575–634 (PRVISVKIPVDKIGEVIGPKGKMINQIQADSGAEITVEDDGTIYIGAADGPAAETARSAI). The region spanning 646 to 718 (GERYLGTIVK…ARGKISLAPG (73 aa)) is the S1 motif domain.

Belongs to the polyribonucleotide nucleotidyltransferase family. Mg(2+) serves as cofactor.

Its subcellular location is the cytoplasm. It catalyses the reaction RNA(n+1) + phosphate = RNA(n) + a ribonucleoside 5'-diphosphate. Functionally, involved in mRNA degradation. Catalyzes the phosphorolysis of single-stranded polyribonucleotides processively in the 3'- to 5'-direction. In Parafrankia sp. (strain EAN1pec), this protein is Polyribonucleotide nucleotidyltransferase.